The primary structure comprises 116 residues: Tachykinin-3 (116 aa).

Residues 1 to 20 (MRSAMLFAAVLALSLAWTFG) form the signal peptide. Positions 21 to 79 (AACEEPQEQGGRLSKDSDLSLLPPPLLRRLYDSRSISLEGLLKVLSKASVGPKETSLPQ) are excised as a propeptide. The residue at position 91 (methionine 91) is a Methionine amide. A disordered region spans residues 92–116 (GKRNSQPDTPADVVEENTPSFGVLK). The propeptide occupies 95-116 (NSQPDTPADVVEENTPSFGVLK).

Belongs to the tachykinin family.

The protein localises to the secreted. Tachykinins are active peptides which excite neurons, evoke behavioral responses, are potent vasodilators and secretagogues, and contract (directly or indirectly) many smooth muscles. Is a critical central regulator of gonadal function. The chain is Tachykinin-3 (Tac3) from Rattus norvegicus (Rat).